The chain runs to 67 residues: N-(5'-phosphoribosyl)anthranilate isomerase (67 aa).

The protein belongs to the TrpF family.

It catalyses the reaction N-(5-phospho-beta-D-ribosyl)anthranilate = 1-(2-carboxyphenylamino)-1-deoxy-D-ribulose 5-phosphate. Its pathway is amino-acid biosynthesis; L-tryptophan biosynthesis; L-tryptophan from chorismate: step 3/5. This Methanococcus voltae protein is N-(5'-phosphoribosyl)anthranilate isomerase (trpF).